A 433-amino-acid chain; its full sequence is Serine/threonine-protein phosphatase 2A activator 2 (433 aa).

The span at 1-10 (MTSQAPPQPA) shows a compositional bias: pro residues. Disordered regions lie at residues 1–67 (MTSQ…NWTF) and 367–400 (SMSE…GTGW). Low complexity predominate over residues 11–23 (SSPGVAAPAAASS). Residues 45 to 59 (NPTPIPETPALPTPP) show a composition bias toward pro residues. Residues 367–382 (SMSEDTGAGDEADVED) are compositionally biased toward acidic residues. A compositionally biased stretch (basic and acidic residues) spans 383–396 (DPHAGHDHTGKAHD).

This sequence belongs to the PTPA-type PPIase family.

It localises to the cytoplasm. It catalyses the reaction [protein]-peptidylproline (omega=180) = [protein]-peptidylproline (omega=0). In terms of biological role, PPIases accelerate the folding of proteins. It catalyzes the cis-trans isomerization of proline imidic peptide bonds in oligopeptides. Acts as a regulatory subunit for PP2A-like phosphatases modulating their activity or substrate specificity, probably by inducing a conformational change in the catalytic subunit, a direct target of the PPIase. Can reactivate inactive phosphatase PP2A-phosphatase methylesterase complexes (PP2Ai) in presence of ATP and Mg(2+) by dissociating the inactive form from the complex. This is Serine/threonine-protein phosphatase 2A activator 2 (RRD2) from Gibberella zeae (strain ATCC MYA-4620 / CBS 123657 / FGSC 9075 / NRRL 31084 / PH-1) (Wheat head blight fungus).